Reading from the N-terminus, the 362-residue chain is Heat-inducible transcription repressor HrcA (362 aa).

This sequence belongs to the HrcA family.

Its function is as follows. Negative regulator of class I heat shock genes (grpE-dnaK-dnaJ and groELS operons). Prevents heat-shock induction of these operons. The protein is Heat-inducible transcription repressor HrcA of Rhizobium etli (strain CIAT 652).